A 276-amino-acid chain; its full sequence is Undecaprenyl-diphosphatase 1 (276 aa).

Transmembrane regions (helical) follow at residues F83 to K103, V108 to W128, V187 to E207, V217 to C237, and V252 to W272.

The protein belongs to the UppP family.

The protein localises to the cell inner membrane. The enzyme catalyses di-trans,octa-cis-undecaprenyl diphosphate + H2O = di-trans,octa-cis-undecaprenyl phosphate + phosphate + H(+). Its function is as follows. Catalyzes the dephosphorylation of undecaprenyl diphosphate (UPP). Confers resistance to bacitracin. The protein is Undecaprenyl-diphosphatase 1 of Burkholderia cenocepacia (strain HI2424).